A 1781-amino-acid polypeptide reads, in one-letter code: Atrochrysone carboxylic acid synthase (1781 aa).

The N-terminal acylcarrier protein transacylase domain (SAT) stretch occupies residues 15–253 (TRDLFRRLHV…KHVALPVYAG (239 aa)). The Ketosynthase family 3 (KS3) domain maps to 390-823 (QSKIAIVGMA…GGNTSVVVEE (434 aa)). Catalysis depends on for beta-ketoacyl synthase activity residues Cys563, His698, and His741. The tract at residues 925–1244 (FAFTGQGASH…SLGLLHCAGL (320 aa)) is malonyl-CoA:ACP transacylase (MAT) domain. The interval 1312–1631 (TSTVQQIIEE…RVLLNRFFSA (320 aa)) is product template (PT) domain. Residues 1316–1451 (QQIIEETFSD…ADIVYGLPTD (136 aa)) are N-terminal hotdog fold. A PKS/mFAS DH domain is found at 1316 to 1626 (QQIIEETFSD…FRRYPRVLLN (311 aa)). The active-site Proton acceptor; for dehydratase activity is His1348. Positions 1478–1626 (IANRLSHNMA…FRRYPRVLLN (149 aa)) are C-terminal hotdog fold. Asp1537 acts as the Proton donor; for dehydratase activity in catalysis. A disordered region spans residues 1633–1653 (DSDTSKHTSATDVSPPKKVVQ). Positions 1703–1780 (VDSDSTASKA…DLKAWLMEYY (78 aa)) constitute a Carrier domain. Ser1740 bears the O-(pantetheine 4'-phosphoryl)serine mark.

The enzyme catalyses holo-[ACP] + 8 malonyl-CoA + 8 H(+) = atrochrysone carboxyl-[ACP] + 8 CO2 + 8 CoA + 2 H2O. It functions in the pathway secondary metabolite biosynthesis. Its function is as follows. Atrochrysone carboxylic acid synthase; part of the gene cluster that mediates the biosynthesis of the dimeric xanthones cryptosporioptides. The pathway begins with the synthesis of atrochrysone thioester by the polyketide synthase dmx-nrPKS. The atrochrysone carboxyl ACP thioesterase dmxR1 then breaks the thioester bond and releases the atrochrysone carboxylic acid from dmx-nrPKS. Atrochrysone carboxylic acid is decarboxylated by the decarboxylase dmxR15, and oxidized by the anthrone oxygenase dmxR16 to yield emodin. Emodin is then reduced to emodin hydroquinone by the oxidoreductase dmxR7. A-ring reduction by the short chain dehydrogenase dmxR18, dehydration by the scytalone dehydratase-like protein dmxR17 and probable spontaneous re-oxidation, results in overall deoxygenation to chrysophanol. Baeyer-Villiger oxidation by the Baeyer-Villiger monooxygenase (BVMO) dmxR6 then yields monodictylactone in equilibrium with monodictyphenone. In the case of the cryptosporioptides biosynthesis, monodictylactone is reduced at C-12 to an alcohol (by the short chain dehydrogenases dmxR12 or dmxR8) and hydroxylated at C-5 by dmxR9, yielding the electron-rich aromatic which could eliminate H(2)O to form the ortho-quinonemethide, followed by tautomerisation to paraquinone and complete the formal reduction to produce the 10-methylgroup. Conjugate addition of C-4a-OH to the resulting paraquinone by the monooxygenase dmxR10 then gives cyclohexadienone, which is then reduced at C-5 by the short chain dehydrogenase dmxR3 to give the dihydroxanthone. The 6,7-epoxide in the cryptosporioptides could be introduced by the cytochrome P450 monooxygenase dmxL3. The highly reducing PKS dmxL2 manufactures butyrate, which is further carboxylated by dmxL1 to form ethylmalonate. It is not yet clear whether the carboxylation occurs while the butyrate is attached to the ACP of dmxL2, but this unusual fungal metabolite could then be esterified to O-5 by the O-acetyltransferase dmxR13. Finally, dimerization performed by dmxR5 gives the observed dimers cryptosporioptides A, B and C as the final products of the pathway. The protein is Atrochrysone carboxylic acid synthase of Cryptosporiopsis sp. (strain 8999).